The sequence spans 244 residues: Cell adhesion molecule CEACAM4 (244 aa).

Residues 1–35 (MGPPSAAPRGGHRPWQGLLITASLLTFWHPPTTVQ) form the signal peptide. Positions 36 to 139 (FTIEALPSSA…DSDQATGQLH (104 aa)) constitute an Ig-like V-type domain. Residues 36-155 (FTIEALPSSA…PGLPVGAVAG (120 aa)) lie on the Extracellular side of the membrane. Asn-57, Asn-104, Asn-111, and Asn-126 each carry an N-linked (GlcNAc...) asparagine glycan. The helical transmembrane segment at 156–176 (IVTGVLVGVALVAALVCFLLL) threads the bilayer. At 177 to 244 (SRTGRASIQR…QIDHKADVVS (68 aa)) the chain is on the cytoplasmic side. A disordered region spans residues 186-215 (RDLREQPPPASTPGHGPSHRSTFSAPLPSP). Residues 222-236 (YEELLYSDANIYCQI) carry the ITAM motif.

The protein belongs to the immunoglobulin superfamily. CEA family. Interacts through its phosphorylated ITAM domain with the SH2 domain-containing cytoplasmic proteins involved in signaling processes during phagocytosis. N-glycosylated. Post-translationally, the cytoplasmic ITAM-like sequence becomes tyrosine phosphorylated by SRC family PTKs upon ligand-mediated receptor clustering and allows to initiate phagocytosis of bound ligand. As to expression, granulocytes.

Its subcellular location is the membrane. Its function is as follows. Granulocyte orphan receptor that acts as an trigger efficient phagocytosis of attached particles. This is Cell adhesion molecule CEACAM4 from Homo sapiens (Human).